The primary structure comprises 335 residues: 5-formaminoimidazole-4-carboxamide-1-(beta)-D-ribofuranosyl 5'-monophosphate synthetase (335 aa).

5-amino-1-(5-phospho-beta-D-ribosyl)imidazole-4-carboxamide is bound by residues His-21 and Ser-86. The ATP-grasp domain maps to 107–315; the sequence is RELLRWEADQ…YFDKPMDMGE (209 aa). ATP contacts are provided by residues 137 to 189 and Glu-211; that span reads PTEV…VPAY. Residue Asn-231 participates in 5-amino-1-(5-phospho-beta-D-ribosyl)imidazole-4-carboxamide binding. Mg(2+) is bound by residues Glu-270 and Glu-283.

It belongs to the phosphohexose mutase family. It depends on Mg(2+) as a cofactor. Requires Mn(2+) as cofactor.

The enzyme catalyses 5-amino-1-(5-phospho-beta-D-ribosyl)imidazole-4-carboxamide + formate + ATP = 5-formamido-1-(5-phospho-D-ribosyl)imidazole-4-carboxamide + ADP + phosphate. It functions in the pathway purine metabolism; IMP biosynthesis via de novo pathway; 5-formamido-1-(5-phospho-D-ribosyl)imidazole-4-carboxamide from 5-amino-1-(5-phospho-D-ribosyl)imidazole-4-carboxamide (formate route): step 1/1. Its function is as follows. Catalyzes the ATP- and formate-dependent formylation of 5-aminoimidazole-4-carboxamide-1-beta-d-ribofuranosyl 5'-monophosphate (AICAR) to 5-formaminoimidazole-4-carboxamide-1-beta-d-ribofuranosyl 5'-monophosphate (FAICAR) in the absence of folates. The protein is 5-formaminoimidazole-4-carboxamide-1-(beta)-D-ribofuranosyl 5'-monophosphate synthetase of Pyrobaculum arsenaticum (strain DSM 13514 / JCM 11321 / PZ6).